The primary structure comprises 319 residues: tRNA (guanine(9)-N(1))-methyltransferase Trmt10A (319 aa).

Disordered stretches follow at residues 16–87 (LSLN…KRQL) and 275–319 (AKIT…SLDS). The segment covering 17–33 (SLNNCPGTTPGTPMSKN) has biased composition (polar residues). A Nuclear localization signal motif is present at residues 35-42 (LKKQRKLA). Basic and acidic residues-rich tracts occupy residues 40–58 (KLAE…EREK), 78–87 (SRKELKKRQL), and 276–302 (KITD…ESDK). Positions 44 to 67 (FAELRKLRREREREKKKQKRREAK) form a coiled coil. One can recognise an SAM-dependent MTase TRM10-type domain in the interval 83–274 (KKRQLADGGK…ETIPMRKGAK (192 aa)).

Belongs to the class IV-like SAM-binding methyltransferase superfamily. TRM10 family.

It is found in the nucleus. The protein localises to the nucleolus. It localises to the chromosome. It carries out the reaction guanosine(9) in tRNA + S-adenosyl-L-methionine = N(1)-methylguanosine(9) in tRNA + S-adenosyl-L-homocysteine + H(+). In terms of biological role, S-adenosyl-L-methionine-dependent guanine N(1)-methyltransferase that catalyzes the formation of N(1)-methylguanine at position 9 (m1G9) in tRNAs. Modulates Mettl3-mediated N6-methyladenosine (m6A) methylation of mRNA 5'-UTRs and 3'-UTRs independent of its methyltransferase activity; influences mRNA stability and protein levels, in particular of Hsp70 chaperone proteins and other stress response proteins. Also regulates stability of transcripts encoding proteins involved in signaling processes and proteins involved in neurogenesis and axon guidance pathways. This chain is tRNA (guanine(9)-N(1))-methyltransferase Trmt10A, found in Drosophila melanogaster (Fruit fly).